Consider the following 100-residue polypeptide: Apolipoprotein C-II (100 aa).

The first 22 residues, 1–22 (MGTRFLLALFLVLLVLGFEVQG), serve as a signal peptide directing secretion. The segment at 66-74 (TVDEKLRDM) is lipid binding. The segment at 78–100 (STAAVSTYAGIFTDQLLTLLKGD) is lipoprotein lipase cofactor.

Belongs to the apolipoprotein C2 family. Proapolipoprotein C-II is synthesized as a sialic acid containing glycoprotein which is subsequently desialylated prior to its proteolytic processing. Post-translationally, proapolipoprotein C-II, the major form found in plasma undergoes proteolytic cleavage of its N-terminal hexapeptide to generate apolipoprotein C-II, which occurs as the minor form in plasma.

The protein resides in the secreted. Component of chylomicrons, very low-density lipoproteins (VLDL), low-density lipoproteins (LDL), and high-density lipoproteins (HDL) in plasma. Plays an important role in lipoprotein metabolism as an activator of lipoprotein lipase. Both proapolipoprotein C-II and apolipoprotein C-II can activate lipoprotein lipase. The sequence is that of Apolipoprotein C-II (APOC2) from Otolemur garnettii (Small-eared galago).